Here is a 527-residue protein sequence, read N- to C-terminus: Ribosomal protein S6 kinase beta-1 (527 aa).

Positions 1–54 (MRRRRRRDGFYPAPDFRDREAEDMAGVFDIDLDQPEDAGSEDELEEGGQLNESM) are disordered. The TOS motif motif lies at 28-32 (FDIDL). Over residues 30–46 (IDLDQPEDAGSEDELEE) the composition is skewed to acidic residues. Residues 91–352 (FELLRVLGKG…AGEVQAHPFF (262 aa)) form the Protein kinase domain. ATP is bound by residues 97–105 (LGKGGYGKV) and Lys123. Asp218 serves as the catalytic Proton acceptor. A Phosphothreonine; by PDPK1 modification is found at Thr252. The region spanning 353–423 (RHINWEELLA…VAPSVLESVK (71 aa)) is the AGC-kinase C-terminal domain. A Phosphoserine modification is found at Ser394. Thr412 is modified (phosphothreonine; by MTOR, NEK6 and NEK7). The tract at residues 424–527 (EKFSFEPKIR…PEHLRMNLEL (104 aa)) is autoinhibitory domain. 2 positions are modified to phosphoserine: Ser434 and Ser441. Thr444 carries the phosphothreonine modification. Phosphoserine occurs at positions 447 and 452. Lys516 carries the post-translational modification N6-acetyllysine.

This sequence belongs to the protein kinase superfamily. AGC Ser/Thr protein kinase family. S6 kinase subfamily. As to quaternary structure, interacts with PPP1R9A/neurabin-1. Interacts with RPTOR. Interacts with IRS1. Interacts with EIF3B and EIF3C. Interacts with TRAF4. Interacts with POLDIP3. Interacts (via N-terminus) with IER5. In terms of processing, phosphorylation at Thr-412 is regulated by mTORC1. The phosphorylation at this site is maintained by an agonist-dependent autophosphorylation mechanism. Activated by phosphorylation at Thr-252 by PDPK1. Dephosphorylation by PPP1CC at Thr-412 in mitochondrion.

Its subcellular location is the cytoplasm. The protein resides in the synapse. The protein localises to the synaptosome. It is found in the mitochondrion outer membrane. It localises to the mitochondrion. It carries out the reaction L-seryl-[protein] + ATP = O-phospho-L-seryl-[protein] + ADP + H(+). It catalyses the reaction L-threonyl-[protein] + ATP = O-phospho-L-threonyl-[protein] + ADP + H(+). Inactivated by binding to URI1. Activation requires multiple phosphorylation events on serine/threonine residues. Activation appears to be first mediated by phosphorylation of multiple sites in the autoinhibitory domain, which facilitates phosphorylation at Thr-412, disrupting the autoinhibitory mechanism and allowing phosphorylation of Thr-252 by PDPK1. The active conformation of the kinase is believed to be stabilized by a mechanism involving three conserved phosphorylation sites located in the kinase domain activation loop (Thr-252) and in the AGC-kinase C-terminal domain (Ser-394 in the middle of the tail/linker region and Thr-412 within a hydrophobic motif at its end). Activated by mTORC1; isoform Alpha I and isoform Alpha II are sensitive to rapamycin, which inhibits activating phosphorylation at Thr-412. Activated by PDPK1. Serine/threonine-protein kinase that acts downstream of mTOR signaling in response to growth factors and nutrients to promote cell proliferation, cell growth and cell cycle progression. Regulates protein synthesis through phosphorylation of EIF4B, RPS6 and EEF2K, and contributes to cell survival by repressing the pro-apoptotic function of BAD. Under conditions of nutrient depletion, the inactive form associates with the EIF3 translation initiation complex. Upon mitogenic stimulation, phosphorylation by the mechanistic target of rapamycin complex 1 (mTORC1) leads to dissociation from the EIF3 complex and activation. The active form then phosphorylates and activates several substrates in the pre-initiation complex, including the EIF2B complex and the cap-binding complex component EIF4B. Also controls translation initiation by phosphorylating a negative regulator of EIF4A, PDCD4, targeting it for ubiquitination and subsequent proteolysis. Promotes initiation of the pioneer round of protein synthesis by phosphorylating POLDIP3/SKAR. In response to IGF1, activates translation elongation by phosphorylating EEF2 kinase (EEF2K), which leads to its inhibition and thus activation of EEF2. Also plays a role in feedback regulation of mTORC2 by mTORC1 by phosphorylating MAPKAP1/SIN1, MTOR and RICTOR, resulting in the inhibition of mTORC2 and AKT1 signaling. Also involved in feedback regulation of mTORC1 and mTORC2 by phosphorylating DEPTOR. Mediates cell survival by phosphorylating the pro-apoptotic protein BAD and suppressing its pro-apoptotic function. Phosphorylates mitochondrial URI1 leading to dissociation of a URI1-PPP1CC complex. The free mitochondrial PPP1CC can then dephosphorylate RPS6KB1 at Thr-412, which is proposed to be a negative feedback mechanism for the RPS6KB1 anti-apoptotic function. Mediates TNF-alpha-induced insulin resistance by phosphorylating IRS1 at multiple serine residues, resulting in accelerated degradation of IRS1. In cells lacking functional TSC1-2 complex, constitutively phosphorylates and inhibits GSK3B. May be involved in cytoskeletal rearrangement through binding to neurabin. Phosphorylates and activates the pyrimidine biosynthesis enzyme CAD, downstream of MTOR. Following activation by mTORC1, phosphorylates EPRS and thereby plays a key role in fatty acid uptake by adipocytes and also most probably in interferon-gamma-induced translation inhibition. The polypeptide is Ribosomal protein S6 kinase beta-1 (RPS6KB1) (Bos taurus (Bovine)).